Here is a 614-residue protein sequence, read N- to C-terminus: Serine/threonine-protein kinase-like protein E (614 aa).

A Protein kinase domain is found at Tyr15–Ser404. Leu21 to Gln29 is an ATP binding site. Positions Pro256–Gly269 are enriched in polar residues. A disordered region spans residues Pro256 to Ser284.

This sequence belongs to the protein kinase superfamily. Ser/Thr protein kinase family.

Functionally, lacks protein kinase activity. In Synechocystis sp. (strain ATCC 27184 / PCC 6803 / Kazusa), this protein is Serine/threonine-protein kinase-like protein E (spkE).